Here is a 220-residue protein sequence, read N- to C-terminus: PKHD-type hydroxylase sync_1544 (220 aa).

Residues 79–173 (KLHRFLISKT…RTVCVGWIES (95 aa)) enclose the Fe2OG dioxygenase domain. Fe cation is bound by residues His-97, Asp-99, and His-154. 2-oxoglutarate is bound at residue Arg-164.

It depends on Fe(2+) as a cofactor. L-ascorbate is required as a cofactor.

The polypeptide is PKHD-type hydroxylase sync_1544 (Synechococcus sp. (strain CC9311)).